Consider the following 189-residue polypeptide: Ras-like protein 1 (189 aa).

10 to 17 (GAGGVGKS) contacts GTP. The Effector region signature appears at 32-40 (YDPTIEDSY). Residues 57 to 61 (DTAGQ) and 116 to 119 (NKCD) contribute to the GTP site. C186 carries the post-translational modification Cysteine methyl ester. The S-geranylgeranyl cysteine moiety is linked to residue C186. The propeptide at 187-189 (KML) is removed in mature form.

It belongs to the small GTPase superfamily. Ras family.

It localises to the cell membrane. The catalysed reaction is GTP + H2O = GDP + phosphate + H(+). Alternates between an inactive form bound to GDP and an active form bound to GTP. Activated by a guanine nucleotide-exchange factor (GEF) and inactivated by a GTPase-activating protein (GAP). In terms of biological role, ras proteins bind GDP/GTP and possess intrinsic GTPase activity. Plays a role in eye development by regulating cell growth, survival of postmitotic ommatidial cells and differentiation of photoreceptor cells. During larval development, mediates Ptth/tor signaling leading to the production of ecdysone, a hormone required for the initiation of metamorphosis. The sequence is that of Ras-like protein 1 from Drosophila grimshawi (Hawaiian fruit fly).